The following is a 114-amino-acid chain: U10-agatoxin-Ao1a (114 aa).

Positions 1 to 15 (MCVATCLCTFAYVLA) are cleaved as a signal peptide. Positions 16–32 (KSDEGENLISKVEETQR) are excised as a propeptide. 5 cysteine pairs are disulfide-bonded: C34–C53, C41–C59, C50–C86, C52–C76, and C61–C74. Positions 95–114 (GSQNPSLCKDPNPRRRRHGK) are disordered.

The protein belongs to the neurotoxin 04 (omega-agtx) family. 03 (type II/III omega-agtx) subfamily. In terms of tissue distribution, expressed by the venom gland.

The protein localises to the secreted. Its function is as follows. Inhibits voltage-gated calcium channels (Cav). This chain is U10-agatoxin-Ao1a, found in Agelena orientalis (Funnel-web spider).